A 534-amino-acid polypeptide reads, in one-letter code: Multicopper oxidase LPR1 homolog 3 (534 aa).

Cu cation-binding residues include H84 and H86. N-linked (GlcNAc...) asparagine glycosylation is present at N109. Cu cation-binding residues include H133 and H135. The region spanning 219-291 is the Plastocyanin-like domain; sequence PFQAVQRRRY…VDFSLVVNPN (73 aa). 6 N-linked (GlcNAc...) asparagine glycosylation sites follow: N234, N291, N312, N323, N341, and N372. H419, H422, and H424 together coordinate Cu cation. A glycan (N-linked (GlcNAc...) asparagine) is linked at N450. Positions 515, 516, 517, 521, and 526 each coordinate Cu cation.

It belongs to the multicopper oxidase family. Cu cation serves as cofactor. In terms of tissue distribution, expressed in roots and basal stems.

The protein localises to the endoplasmic reticulum membrane. Multicopper oxidase that may play a role in the maintenance of inorganic phosphate homeostasis. In Oryza sativa subsp. japonica (Rice), this protein is Multicopper oxidase LPR1 homolog 3.